A 284-amino-acid polypeptide reads, in one-letter code: D-tagatose-1,6-bisphosphate aldolase subunit GatY (284 aa).

Asp82 serves as the catalytic Proton donor. Zn(2+) contacts are provided by His83 and His180. Residue Gly181 coordinates dihydroxyacetone phosphate. His208 serves as a coordination point for Zn(2+). Dihydroxyacetone phosphate contacts are provided by residues 209–211 and 230–233; these read GAS and NVAT.

This sequence belongs to the class II fructose-bisphosphate aldolase family. TagBP aldolase GatY subfamily. Forms a complex with GatZ. Requires Zn(2+) as cofactor.

The enzyme catalyses D-tagatofuranose 1,6-bisphosphate = D-glyceraldehyde 3-phosphate + dihydroxyacetone phosphate. It participates in carbohydrate metabolism; D-tagatose 6-phosphate degradation; D-glyceraldehyde 3-phosphate and glycerone phosphate from D-tagatose 6-phosphate: step 2/2. In terms of biological role, catalytic subunit of the tagatose-1,6-bisphosphate aldolase GatYZ, which catalyzes the reversible aldol condensation of dihydroxyacetone phosphate (DHAP or glycerone-phosphate) with glyceraldehyde 3-phosphate (G3P) to produce tagatose 1,6-bisphosphate (TBP). Requires GatZ subunit for full activity and stability. Is involved in the catabolism of galactitol. The chain is D-tagatose-1,6-bisphosphate aldolase subunit GatY from Escherichia coli (strain SMS-3-5 / SECEC).